The primary structure comprises 288 residues: MAGAKEIRSKISSINKTRKITRAMEMVAASKMRKTQERMRASKPYANKIYEVIKHIARAASEYRHPFMSEREIKRIGIIVVTTDRGLCGGLNSNLFRETIRTIRNWQEHGKEVDIAVIGRKGQAFFRRVGGNILGSIDHLGDTPSINDFIGVVKIMLDAYYNGTIDSLHIVYNEFINTMTQKPFVKQLLPLPKSEEDKKTLGHHWDYIYEPEAKELLDEILERYIELQVYQAVVENIACEQAAKMIAMKSATDNAGDLIKEFQLAYNKARQAAITQELAEIVGGAAAL.

This sequence belongs to the ATPase gamma chain family. In terms of assembly, F-type ATPases have 2 components, CF(1) - the catalytic core - and CF(0) - the membrane proton channel. CF(1) has five subunits: alpha(3), beta(3), gamma(1), delta(1), epsilon(1). CF(0) has three main subunits: a, b and c.

It localises to the cell inner membrane. Produces ATP from ADP in the presence of a proton gradient across the membrane. The gamma chain is believed to be important in regulating ATPase activity and the flow of protons through the CF(0) complex. The sequence is that of ATP synthase gamma chain from Legionella pneumophila (strain Corby).